Consider the following 466-residue polypeptide: MRPMRAGAGAAGESCKDDGVRPDDVSRLTADAVVRRVALLAVHTSPLAQPGTGDAGGMNVYVLQSALHLAKRGIEVEIFTRATASADPPVVRVAPGVLVRNVVAGPFEGLDKYDLPTQLCAFAAGVLRAEAAHEPGHYDIVHSHYWLSGQVGWLARDRWAVPLVHTAHTLAAVKNAALANGDAPEPPLRTVGEQQVVDEADRLIVNTDDEAKQLISIHRADPARIDVVHPGVDLEVFRPGDRQQARTALGLRPEEKVVAFVGRIQPLKAPDIVLRAVAKLPGVRIIVAGGPSGSGLASPDGLAQLADELGIAERVTFLPPQSRTDLARVFHAVDLVAIPSYSESFGLVAVEAQACGTPVVAAAVGGLPVAVRDGVSGTLVSGHDVDQWAAAIDGLLRSNAGAQGALMSRAAAEHAATFSWENTTDALLASYRRAIGDFTAGRRRKVRDPVAARKPRRWTARRGVGA.

Residues 1-12 (MRPMRAGAGAAG) are compositionally biased toward low complexity. Positions 1 to 22 (MRPMRAGAGAAGESCKDDGVRP) are disordered. Residue His43 coordinates 1D-myo-inositol 3-phosphate. UDP-N-acetyl-alpha-D-glucosamine is bound by residues 49–50 (QP) and Gly57. Residues 54–59 (DAGGMN), Lys112, Tyr145, Thr169, and Arg189 each bind 1D-myo-inositol 3-phosphate. Positions 263, 268, and 321 each coordinate UDP-N-acetyl-alpha-D-glucosamine. Residues Phe330, His331, and Val333 each contribute to the Mg(2+) site. The UDP-N-acetyl-alpha-D-glucosamine site is built by Glu343 and Glu351. Thr357 lines the Mg(2+) pocket. The disordered stretch occupies residues 446–466 (VRDPVAARKPRRWTARRGVGA).

This sequence belongs to the glycosyltransferase group 1 family. MshA subfamily. As to quaternary structure, homodimer.

The enzyme catalyses 1D-myo-inositol 3-phosphate + UDP-N-acetyl-alpha-D-glucosamine = 1D-myo-inositol 2-acetamido-2-deoxy-alpha-D-glucopyranoside 3-phosphate + UDP + H(+). In terms of biological role, catalyzes the transfer of a N-acetyl-glucosamine moiety to 1D-myo-inositol 3-phosphate to produce 1D-myo-inositol 2-acetamido-2-deoxy-glucopyranoside 3-phosphate in the mycothiol biosynthesis pathway. The polypeptide is D-inositol 3-phosphate glycosyltransferase (Mycobacterium marinum (strain ATCC BAA-535 / M)).